The chain runs to 44 residues: Large ribosomal subunit protein bL34 (44 aa).

Positions 1-26 are disordered; sequence MKMTFQPKKRQRAKVHGFRQRMKTAG. A compositionally biased stretch (basic residues) spans 7–22; sequence PKKRQRAKVHGFRQRM.

This sequence belongs to the bacterial ribosomal protein bL34 family.

This is Large ribosomal subunit protein bL34 from Agathobacter rectalis (strain ATCC 33656 / DSM 3377 / JCM 17463 / KCTC 5835 / VPI 0990) (Eubacterium rectale).